A 555-amino-acid chain; its full sequence is Transmembrane protein 87B (555 aa).

A signal peptide spans 1-42; the sequence is MVAACRSVAGLLPRRRRCFPARAPLLRVALCLLCWTPAAVRA. Residues 43–214 lie on the Lumenal side of the membrane; the sequence is VPELGLWLET…PHGYISASDW (172 aa). N-linked (GlcNAc...) asparagine glycans are attached at residues N68 and N197. A helical transmembrane segment spans residues 215-235; the sequence is PLMIFYMVMCIVYILYGILWL. At 236-247 the chain is on the cytoplasmic side; it reads TWSACYWKDILR. Residues 248 to 268 form a helical membrane-spanning segment; the sequence is IQFWIAAVIFLGMLEKAVFYS. The Lumenal segment spans residues 269 to 299; sequence EYQNISNTGLSTQGLLIFAELISAIKRTLAR. A glycan (N-linked (GlcNAc...) asparagine) is linked at N272. Residues 300-320 traverse the membrane as a helical segment; that stretch reads LLVIIVSLGYGIVKPRLGTVM. Residues 321–322 lie on the Cytoplasmic side of the membrane; it reads HR. The chain crosses the membrane as a helical span at residues 323–343; the sequence is VIGLGLLYLIFAAVEGVMRVI. Residues 344–350 are Lumenal-facing; the sequence is GGSNHLA. The chain crosses the membrane as a helical span at residues 351 to 371; it reads VVLDDIILAVIDSIFVWFIFI. Residues 372 to 396 lie on the Cytoplasmic side of the membrane; sequence SLAQTMKTLRLRKNTVKFSLYRHFK. A helical transmembrane segment spans residues 397–417; that stretch reads NTLIFAVLASIVFMGWTTKTF. At 418–429 the chain is on the lumenal side; that stretch reads RIAKCQSDWMER. A helical transmembrane segment spans residues 430–450; sequence WVDDAFWSFLFSLILIVIMFL. Over 451–555 the chain is Cytoplasmic; that stretch reads WRPSANNQRY…EKMFSSEKIM (105 aa). Phosphoserine occurs at positions 469, 494, 496, and 534.

It belongs to the LU7TM family. TMEM87 subfamily.

The protein localises to the golgi apparatus membrane. Functionally, may be involved in retrograde transport from endosomes to the trans-Golgi network (TGN). The sequence is that of Transmembrane protein 87B from Homo sapiens (Human).